A 240-amino-acid polypeptide reads, in one-letter code: Dihydromonapterin reductase (240 aa).

The active-site Proton acceptor is the Y152.

It belongs to the short-chain dehydrogenases/reductases (SDR) family. FolM subfamily.

It carries out the reaction (6S)-5,6,7,8-tetrahydrofolate + NADP(+) = 7,8-dihydrofolate + NADPH + H(+). The catalysed reaction is 7,8-dihydromonapterin + NADPH + H(+) = 5,6,7,8-tetrahydromonapterin + NADP(+). Its function is as follows. Catalyzes the reduction of dihydromonapterin to tetrahydromonapterin. Also has lower activity with dihydrofolate. This Escherichia coli O139:H28 (strain E24377A / ETEC) protein is Dihydromonapterin reductase (folM).